Consider the following 208-residue polypeptide: Pyrophosphate-energized proton pump 2 (208 aa).

The next 5 helical transmembrane spans lie at 19-39 (AYPL…TFFV), 54-74 (GLIV…SFTI), 89-109 (GGNL…IVVI), 140-160 (LAVS…GIIA), and 167-187 (LFGT…IVAL).

It belongs to the H(+)-translocating pyrophosphatase (TC 3.A.10) family. In terms of assembly, homodimer. Requires Mg(2+) as cofactor.

Its subcellular location is the cell inner membrane. It carries out the reaction diphosphate + H2O + H(+)(in) = 2 phosphate + 2 H(+)(out). Functionally, proton pump that utilizes the energy of pyrophosphate hydrolysis as the driving force for proton movement across the membrane. Generates a proton motive force. The chain is Pyrophosphate-energized proton pump 2 (hppA2) from Mycoplana dimorpha.